The sequence spans 466 residues: Asparagine--tRNA ligase (466 aa).

It belongs to the class-II aminoacyl-tRNA synthetase family. In terms of assembly, homodimer.

It is found in the cytoplasm. The enzyme catalyses tRNA(Asn) + L-asparagine + ATP = L-asparaginyl-tRNA(Asn) + AMP + diphosphate + H(+). In Vibrio cholerae serotype O1 (strain ATCC 39315 / El Tor Inaba N16961), this protein is Asparagine--tRNA ligase.